The chain runs to 94 residues: Co-chaperonin GroES (94 aa).

It belongs to the GroES chaperonin family. Heptamer of 7 subunits arranged in a ring. Interacts with the chaperonin GroEL.

Its subcellular location is the cytoplasm. Together with the chaperonin GroEL, plays an essential role in assisting protein folding. The GroEL-GroES system forms a nano-cage that allows encapsulation of the non-native substrate proteins and provides a physical environment optimized to promote and accelerate protein folding. GroES binds to the apical surface of the GroEL ring, thereby capping the opening of the GroEL channel. The polypeptide is Co-chaperonin GroES (Clostridioides difficile (Peptoclostridium difficile)).